A 360-amino-acid chain; its full sequence is Phospho-N-acetylmuramoyl-pentapeptide-transferase (360 aa).

Helical transmembrane passes span 27–47 (IVSL…MIAW), 73–93 (TMGG…WANL), 94–114 (SNPY…VGFV), 132–152 (WKYF…YAIG), 168–188 (VMPQ…VGTS), 199–219 (GLAI…AWAT), 236–256 (ASEL…FLWF), 263–283 (VFMG…IAVL), 288–308 (FLLV…ILQV), and 338–358 (VIVR…ATLK).

This sequence belongs to the glycosyltransferase 4 family. MraY subfamily. Mg(2+) is required as a cofactor.

The protein localises to the cell inner membrane. It carries out the reaction UDP-N-acetyl-alpha-D-muramoyl-L-alanyl-gamma-D-glutamyl-meso-2,6-diaminopimeloyl-D-alanyl-D-alanine + di-trans,octa-cis-undecaprenyl phosphate = di-trans,octa-cis-undecaprenyl diphospho-N-acetyl-alpha-D-muramoyl-L-alanyl-D-glutamyl-meso-2,6-diaminopimeloyl-D-alanyl-D-alanine + UMP. The protein operates within cell wall biogenesis; peptidoglycan biosynthesis. Catalyzes the initial step of the lipid cycle reactions in the biosynthesis of the cell wall peptidoglycan: transfers peptidoglycan precursor phospho-MurNAc-pentapeptide from UDP-MurNAc-pentapeptide onto the lipid carrier undecaprenyl phosphate, yielding undecaprenyl-pyrophosphoryl-MurNAc-pentapeptide, known as lipid I. This is Phospho-N-acetylmuramoyl-pentapeptide-transferase from Pectobacterium carotovorum subsp. carotovorum (strain PC1).